Here is a 157-residue protein sequence, read N- to C-terminus: Crossover junction endodeoxyribonuclease RuvC (157 aa).

Active-site residues include D7, E67, and D140. Residues D7, E67, and D140 each coordinate Mg(2+).

The protein belongs to the RuvC family. As to quaternary structure, homodimer which binds Holliday junction (HJ) DNA. The HJ becomes 2-fold symmetrical on binding to RuvC with unstacked arms; it has a different conformation from HJ DNA in complex with RuvA. In the full resolvosome a probable DNA-RuvA(4)-RuvB(12)-RuvC(2) complex forms which resolves the HJ. The cofactor is Mg(2+).

It localises to the cytoplasm. It catalyses the reaction Endonucleolytic cleavage at a junction such as a reciprocal single-stranded crossover between two homologous DNA duplexes (Holliday junction).. In terms of biological role, the RuvA-RuvB-RuvC complex processes Holliday junction (HJ) DNA during genetic recombination and DNA repair. Endonuclease that resolves HJ intermediates. Cleaves cruciform DNA by making single-stranded nicks across the HJ at symmetrical positions within the homologous arms, yielding a 5'-phosphate and a 3'-hydroxyl group; requires a central core of homology in the junction. The consensus cleavage sequence is 5'-(A/T)TT(C/G)-3'. Cleavage occurs on the 3'-side of the TT dinucleotide at the point of strand exchange. HJ branch migration catalyzed by RuvA-RuvB allows RuvC to scan DNA until it finds its consensus sequence, where it cleaves and resolves the cruciform DNA. This chain is Crossover junction endodeoxyribonuclease RuvC, found in Rickettsia prowazekii (strain Madrid E).